Reading from the N-terminus, the 734-residue chain is Terpene cyclase/mutase ntnI (734 aa).

Polar residues predominate over residues 1-12 (MQSHIGQWTSTA). The tract at residues 1 to 26 (MQSHIGQWTSTAKGHLSRDENGDEKT) is disordered. Residues 16 to 26 (LSRDENGDEKT) are compositionally biased toward basic and acidic residues. PFTB repeat units lie at residues 130 to 172 (AIEI…RLLG), 493 to 534 (LHNA…SGKT), 570 to 610 (RTRG…ALAG), and 619 to 668 (SRKG…GLMH).

It belongs to the terpene cyclase/mutase family.

It participates in secondary metabolite biosynthesis; terpenoid biosynthesis. Terpene cyclase/mutase; part of the gene cluster that mediates the biosynthesis of the meroterpenoids nectripenoids A and B, as well as cochliquninone D and isocochliquninone E. The pathway probably begins with the HR-PKS ntnH that catalyzes two chain-extension steps to form a reduced triketide, which then primes the SAT domain in the NR-PKS ntnG to initiate three more cycles of extension to give a linear hexaketide corresponding to the polyketide part of nectripenoids. The FAD-dependent monooxygenase ntnJ then performs an oxidative decarboxylation at C11 of the ntnH/ntnG product, via an electrophilic aromatic hydroxylation with concomitant ipso-decarboxylation. The membrane-bound polyprenyl transferase ntnF then introduces a farnesyl group before the FAD-dependent monooxygenase ntnK functions as the first epoxidase on terminal C12'-C13' olefin, followed by a second epoxidation on C7'-C8' catalyzed by ntnA. The terpene cyclase/mutase ntnI then initiates the sequential tricyclic ring formation through protonation of the terminal epoxide and catalyzes the regioselective and stereoselective 6/6/6-tricyclic ring formation. The cytochrome P450 monooxygenase ntnM may then hydroxylate C1'. The protein is Terpene cyclase/mutase ntnI of Nectria sp.